The following is a 101-amino-acid chain: Small ribosomal subunit protein uS14 (101 aa).

Belongs to the universal ribosomal protein uS14 family. As to quaternary structure, part of the 30S ribosomal subunit. Contacts proteins S3 and S10.

Its function is as follows. Binds 16S rRNA, required for the assembly of 30S particles and may also be responsible for determining the conformation of the 16S rRNA at the A site. In Pseudomonas putida (strain ATCC 47054 / DSM 6125 / CFBP 8728 / NCIMB 11950 / KT2440), this protein is Small ribosomal subunit protein uS14.